Reading from the N-terminus, the 131-residue chain is Transcription antitermination protein NusB (131 aa).

It belongs to the NusB family.

Its function is as follows. Involved in transcription antitermination. Required for transcription of ribosomal RNA (rRNA) genes. Binds specifically to the boxA antiterminator sequence of the ribosomal RNA (rrn) operons. The sequence is that of Transcription antitermination protein NusB from Campylobacter fetus subsp. fetus (strain 82-40).